Here is a 103-residue protein sequence, read N- to C-terminus: Pyrimidine/purine nucleoside phosphorylase (103 aa).

This sequence belongs to the nucleoside phosphorylase PpnP family.

The enzyme catalyses a purine D-ribonucleoside + phosphate = a purine nucleobase + alpha-D-ribose 1-phosphate. It carries out the reaction adenosine + phosphate = alpha-D-ribose 1-phosphate + adenine. The catalysed reaction is cytidine + phosphate = cytosine + alpha-D-ribose 1-phosphate. It catalyses the reaction guanosine + phosphate = alpha-D-ribose 1-phosphate + guanine. The enzyme catalyses inosine + phosphate = alpha-D-ribose 1-phosphate + hypoxanthine. It carries out the reaction thymidine + phosphate = 2-deoxy-alpha-D-ribose 1-phosphate + thymine. The catalysed reaction is uridine + phosphate = alpha-D-ribose 1-phosphate + uracil. It catalyses the reaction xanthosine + phosphate = alpha-D-ribose 1-phosphate + xanthine. Catalyzes the phosphorolysis of diverse nucleosides, yielding D-ribose 1-phosphate and the respective free bases. Can use uridine, adenosine, guanosine, cytidine, thymidine, inosine and xanthosine as substrates. Also catalyzes the reverse reactions. The chain is Pyrimidine/purine nucleoside phosphorylase from Shewanella oneidensis (strain ATCC 700550 / JCM 31522 / CIP 106686 / LMG 19005 / NCIMB 14063 / MR-1).